The sequence spans 354 residues: Protein-arginine kinase (354 aa).

The Phosphagen kinase C-terminal domain maps to 24–254 (IVLSSRIRLA…QQIIQQEKMA (231 aa)). Residues 27 to 31 (SSRIR), His-92, Arg-125, 176 to 180 (RASVM), and 207 to 212 (RGIYGE) each bind ATP. The short motif at 337–342 (RDYRRA) is the RDXXRA motif of the pArg binding pocket involved in allosteric regulation element.

The protein belongs to the ATP:guanido phosphotransferase family.

It carries out the reaction L-arginyl-[protein] + ATP = N(omega)-phospho-L-arginyl-[protein] + ADP + H(+). Its activity is regulated as follows. Appears to be allosterically activated by the binding of pArg-containing polypeptides to the pArg-binding pocket localized in the C-terminal domain of McsB. Its function is as follows. Catalyzes the specific phosphorylation of arginine residues in a large number of proteins. Is part of the bacterial stress response system. Protein arginine phosphorylation has a physiologically important role and is involved in the regulation of many critical cellular processes, such as protein homeostasis, motility, competence, and stringent and stress responses, by regulating gene expression and protein activity. The protein is Protein-arginine kinase of Bacillus anthracis (strain A0248).